Consider the following 156-residue polypeptide: 6,7-dimethyl-8-ribityllumazine synthase (156 aa).

5-amino-6-(D-ribitylamino)uracil-binding positions include phenylalanine 23, 57-59 (AYE), and 81-83 (AVI). 86-87 (ST) contributes to the (2S)-2-hydroxy-3-oxobutyl phosphate binding site. The active-site Proton donor is histidine 89. Phenylalanine 114 serves as a coordination point for 5-amino-6-(D-ribitylamino)uracil. Residue arginine 128 participates in (2S)-2-hydroxy-3-oxobutyl phosphate binding.

Belongs to the DMRL synthase family.

The enzyme catalyses (2S)-2-hydroxy-3-oxobutyl phosphate + 5-amino-6-(D-ribitylamino)uracil = 6,7-dimethyl-8-(1-D-ribityl)lumazine + phosphate + 2 H2O + H(+). It participates in cofactor biosynthesis; riboflavin biosynthesis; riboflavin from 2-hydroxy-3-oxobutyl phosphate and 5-amino-6-(D-ribitylamino)uracil: step 1/2. Its function is as follows. Catalyzes the formation of 6,7-dimethyl-8-ribityllumazine by condensation of 5-amino-6-(D-ribitylamino)uracil with 3,4-dihydroxy-2-butanone 4-phosphate. This is the penultimate step in the biosynthesis of riboflavin. This is 6,7-dimethyl-8-ribityllumazine synthase from Helicobacter hepaticus (strain ATCC 51449 / 3B1).